Reading from the N-terminus, the 234-residue chain is Adenosine 5'-phosphosulfate reductase (234 aa).

The [4Fe-4S] cluster site is built by cysteine 120, cysteine 121, cysteine 203, and cysteine 206. The Nucleophile; cysteine thiosulfonate intermediate role is filled by cysteine 229.

It belongs to the PAPS reductase family. CysH subfamily. [4Fe-4S] cluster serves as cofactor.

The protein localises to the cytoplasm. The catalysed reaction is [thioredoxin]-disulfide + sulfite + AMP + 2 H(+) = adenosine 5'-phosphosulfate + [thioredoxin]-dithiol. It participates in sulfur metabolism; hydrogen sulfide biosynthesis; sulfite from sulfate. Functionally, catalyzes the formation of sulfite from adenosine 5'-phosphosulfate (APS) using thioredoxin as an electron donor. The polypeptide is Adenosine 5'-phosphosulfate reductase (Bacillus cytotoxicus (strain DSM 22905 / CIP 110041 / 391-98 / NVH 391-98)).